The sequence spans 489 residues: MMQTLLRGLCVVVLFWGYIKASADFDCRRTSQTCVTGTCDDVSGSCVCPTDAGGSPSHTNKDCGLELAKVASPATLCDPPCLNGGQCFEPTADTYMCMCSEAFYGSQCENPRKQVECSGDQITINYMPIPTFSGDIFILDNRNTPECAFTEANGMYTATFTYQQCGVITTNDQPNVGDTSYQTSAAVRFNANIERGTDMKLTAECVIDGSGQSNLNNNIGTVSVDQRSNLTEETALTQYQPVSFQLQGKNGNPMPVPVNLGDELRIYIPLADTGKYTKLKITDLTTNNGMAAPDMVTETLIFNGCLTDIGEALVTGDISSDPAIPAIIINFMAFRLRGSPQVKFEAKVKVCEAADTSCEPGSCPTPAPPAPVQPTPSENPGRKRRAASDNEVILHETLTVLDPRSNEKLRLPHNKSDKKSQQNADPQQCLQSTEIMVMVIVLIVAVVLLLVITTCLAVKFMKQRAAQVKIYNSDMPTGNNTVRIPHSAF.

The N-terminal stretch at 1-23 (MMQTLLRGLCVVVLFWGYIKASA) is a signal peptide. The 37-residue stretch at 73 to 109 (PATLCDPPCLNGGQCFEPTADTYMCMCSEAFYGSQCE) folds into the EGF-like domain. 3 disulfides stabilise this stretch: Cys-77/Cys-87, Cys-81/Cys-97, and Cys-99/Cys-108. One can recognise a ZP domain in the interval 116–370 (ECSGDQITIN…GSCPTPAPPA (255 aa)). The N-linked (GlcNAc...) asparagine glycan is linked to Asn-229. 2 disordered regions span residues 358–389 (CEPG…AASD) and 404–425 (RSNE…QNAD). A compositionally biased stretch (pro residues) spans 363 to 374 (CPTPAPPAPVQP). Positions 404–420 (RSNEKLRLPHNKSDKKS) are enriched in basic and acidic residues. N-linked (GlcNAc...) asparagine glycans are attached at residues Asn-414 and Asn-479.

As to expression, component of the acid-insoluble organic matrix of calcified layers of the shell (at protein level).

Its subcellular location is the secreted. The polypeptide is EGF-like domain-containing protein 2 (Lottia gigantea (Giant owl limpet)).